A 216-amino-acid chain; its full sequence is Imidazole glycerol phosphate synthase subunit HisH (216 aa).

A Glutamine amidotransferase type-1 domain is found at 2–216 (RVAIIDYGSG…LITNFLRWRP (215 aa)). The active-site Nucleophile is Cys-88. Active-site residues include His-196 and Glu-198.

As to quaternary structure, heterodimer of HisH and HisF.

The protein resides in the cytoplasm. It catalyses the reaction 5-[(5-phospho-1-deoxy-D-ribulos-1-ylimino)methylamino]-1-(5-phospho-beta-D-ribosyl)imidazole-4-carboxamide + L-glutamine = D-erythro-1-(imidazol-4-yl)glycerol 3-phosphate + 5-amino-1-(5-phospho-beta-D-ribosyl)imidazole-4-carboxamide + L-glutamate + H(+). The enzyme catalyses L-glutamine + H2O = L-glutamate + NH4(+). It functions in the pathway amino-acid biosynthesis; L-histidine biosynthesis; L-histidine from 5-phospho-alpha-D-ribose 1-diphosphate: step 5/9. Functionally, IGPS catalyzes the conversion of PRFAR and glutamine to IGP, AICAR and glutamate. The HisH subunit catalyzes the hydrolysis of glutamine to glutamate and ammonia as part of the synthesis of IGP and AICAR. The resulting ammonia molecule is channeled to the active site of HisF. This Mesorhizobium japonicum (strain LMG 29417 / CECT 9101 / MAFF 303099) (Mesorhizobium loti (strain MAFF 303099)) protein is Imidazole glycerol phosphate synthase subunit HisH.